The primary structure comprises 544 residues: CTP synthase (544 aa).

Residues 1 to 266 (MIRYIFITGG…DSEVLSHFGI (266 aa)) are amidoligase domain. S13 lines the CTP pocket. S13 serves as a coordination point for UTP. Residues 14–19 (SLGKGI) and D71 contribute to the ATP site. Mg(2+)-binding residues include D71 and E140. CTP contacts are provided by residues 147-149 (DIE), 187-192 (KTKPTQ), and K223. UTP is bound by residues 187-192 (KTKPTQ) and K223. Residue 239-241 (RDV) coordinates ATP. One can recognise a Glutamine amidotransferase type-1 domain in the interval 292–543 (TIGLVGKYTD…IAAAVKQSRL (252 aa)). G355 provides a ligand contact to L-glutamine. The active-site Nucleophile; for glutamine hydrolysis is C382. Residues 383 to 386 (YGMQ), E406, and R471 each bind L-glutamine. Active-site residues include H516 and E518.

Belongs to the CTP synthase family. Homotetramer.

It catalyses the reaction UTP + L-glutamine + ATP + H2O = CTP + L-glutamate + ADP + phosphate + 2 H(+). The enzyme catalyses L-glutamine + H2O = L-glutamate + NH4(+). It carries out the reaction UTP + NH4(+) + ATP = CTP + ADP + phosphate + 2 H(+). The protein operates within pyrimidine metabolism; CTP biosynthesis via de novo pathway; CTP from UDP: step 2/2. Its activity is regulated as follows. Allosterically activated by GTP, when glutamine is the substrate; GTP has no effect on the reaction when ammonia is the substrate. The allosteric effector GTP functions by stabilizing the protein conformation that binds the tetrahedral intermediate(s) formed during glutamine hydrolysis. Inhibited by the product CTP, via allosteric rather than competitive inhibition. In terms of biological role, catalyzes the ATP-dependent amination of UTP to CTP with either L-glutamine or ammonia as the source of nitrogen. Regulates intracellular CTP levels through interactions with the four ribonucleotide triphosphates. This is CTP synthase from Hyphomonas neptunium (strain ATCC 15444).